The chain runs to 328 residues: UDP-glucose 4-epimerase (328 aa).

Position 119 (Thr-119) interacts with substrate. Tyr-143 functions as the Proton acceptor in the catalytic mechanism.

This sequence belongs to the NAD(P)-dependent epimerase/dehydratase family. It depends on NAD(+) as a cofactor.

The enzyme catalyses UDP-alpha-D-glucose = UDP-alpha-D-galactose. It functions in the pathway carbohydrate metabolism; galactose metabolism. It participates in glycan metabolism; exopolysaccharide biosynthesis. This chain is UDP-glucose 4-epimerase (exoB), found in Rhizobium meliloti (strain 1021) (Ensifer meliloti).